A 264-amino-acid chain; its full sequence is Dehydrodolichyl diphosphate synthase complex subunit SPAC4D7.04c (264 aa).

The protein belongs to the UPP synthase family. As to quaternary structure, forms an active dehydrodolichyl diphosphate synthase complex with nus1. Mg(2+) is required as a cofactor.

It is found in the endoplasmic reticulum membrane. It carries out the reaction n isopentenyl diphosphate + (2E,6E)-farnesyl diphosphate = a di-trans,poly-cis-polyprenyl diphosphate + n diphosphate. Its pathway is protein modification; protein glycosylation. Functionally, with nus1, forms the dehydrodolichyl diphosphate synthase (DDS) complex, an essential component of the dolichol monophosphate (Dol-P) biosynthetic machinery. Adds multiple copies of isopentenyl pyrophosphate (IPP) to farnesyl pyrophosphate (FPP) to produce dehydrodolichyl diphosphate (Dedol-PP), a precursor of dolichol which is utilized as a sugar carrier in protein glycosylation in the endoplasmic reticulum (ER). The sequence is that of Dehydrodolichyl diphosphate synthase complex subunit SPAC4D7.04c from Schizosaccharomyces pombe (strain 972 / ATCC 24843) (Fission yeast).